The primary structure comprises 229 residues: Triosephosphate isomerase (229 aa).

9–11 (NLK) serves as a coordination point for substrate. The active-site Electrophile is H93. E141 serves as the catalytic Proton acceptor. Substrate contacts are provided by residues I146, G181, and 202-203 (AS).

Belongs to the triosephosphate isomerase family. Homotetramer; dimer of dimers.

Its subcellular location is the cytoplasm. It catalyses the reaction D-glyceraldehyde 3-phosphate = dihydroxyacetone phosphate. It participates in carbohydrate biosynthesis; gluconeogenesis. Its pathway is carbohydrate degradation; glycolysis; D-glyceraldehyde 3-phosphate from glycerone phosphate: step 1/1. In terms of biological role, involved in the gluconeogenesis. Catalyzes stereospecifically the conversion of dihydroxyacetone phosphate (DHAP) to D-glyceraldehyde-3-phosphate (G3P). The chain is Triosephosphate isomerase from Pyrobaculum islandicum (strain DSM 4184 / JCM 9189 / GEO3).